Consider the following 197-residue polypeptide: Nucleoid occlusion factor SlmA (197 aa).

The region spanning 7-67 is the HTH tetR-type domain; it reads INRREHILQC…GLIEFIEDAI (61 aa). Positions 30–49 form a DNA-binding region, H-T-H motif; the sequence is TTAKLAAEVGVSEAALYRHF. The stretch at 110–130 forms a coiled coil; that stretch reads ALLGENERLRSRIDVLFAKIE.

Belongs to the nucleoid occlusion factor SlmA family. Homodimer. Interacts with FtsZ.

Its subcellular location is the cytoplasm. It localises to the nucleoid. In terms of biological role, required for nucleoid occlusion (NO) phenomenon, which prevents Z-ring formation and cell division over the nucleoid. Acts as a DNA-associated cell division inhibitor that binds simultaneously chromosomal DNA and FtsZ, and disrupts the assembly of FtsZ polymers. SlmA-DNA-binding sequences (SBS) are dispersed on non-Ter regions of the chromosome, preventing FtsZ polymerization at these regions. The polypeptide is Nucleoid occlusion factor SlmA (Shewanella frigidimarina (strain NCIMB 400)).